Consider the following 289-residue polypeptide: Rhodopsin (289 aa).

The Extracellular segment spans residues 1–7 (YLVNPAA). Residues 8 to 32 (YAALGAYMFLLILIGFPVNFLTLYV) traverse the membrane as a helical segment. The Cytoplasmic segment spans residues 33–44 (TIEHKKLRTPLN). The helical transmembrane segment at 45 to 67 (YILLNLAVANLFMVLGGFTTTMY) threads the bilayer. At 68–81 (TSMHGYFVLGRLGC) the chain is on the extracellular side. Cysteine 81 and cysteine 158 are disulfide-bonded. Residues 82-104 (NLEGFFATMGGEIALWSLVVLAI) traverse the membrane as a helical segment. The 'Ionic lock' involved in activated form stabilization signature appears at 105–107 (ERW). Residues 105-123 (ERWIVVCKPISNFRFTEDH) are Cytoplasmic-facing. Residues 124-144 (AIMGLAFTWVMALSCAVPPLV) traverse the membrane as a helical segment. Over 145–173 (GWSRYIPEGMQCSCGVDYYTRAEGFNNES) the chain is Extracellular. The N-linked (GlcNAc...) asparagine glycan is linked to asparagine 171. The helical transmembrane segment at 174-195 (FVIYMFIVHFLTPLIIISFCYG) threads the bilayer. Residues 196–223 (RLLCAVKEAAAAQQESETTQRAEREVSR) lie on the Cytoplasmic side of the membrane. The helical transmembrane segment at 224-245 (MVVMMVISFLMCWLPYASVAWY) threads the bilayer. The Extracellular segment spans residues 246 to 257 (IFCNQGSEFGPI). Residues 258–279 (FMTLPAFFAKSSAIYNPLIYIC) traverse the membrane as a helical segment. At lysine 267 the chain carries N6-(retinylidene)lysine. The Cytoplasmic portion of the chain corresponds to 280–289 (MNKQFRHCMI).

The protein belongs to the G-protein coupled receptor 1 family. Opsin subfamily. In terms of processing, phosphorylated on some or all of the serine and threonine residues present in the C-terminal region. Post-translationally, contains one covalently linked retinal chromophore.

The protein resides in the membrane. It is found in the cell projection. It localises to the cilium. The protein localises to the photoreceptor outer segment. In terms of biological role, photoreceptor required for image-forming vision at low light intensity. While most salt water fish species use retinal as chromophore, most freshwater fish use 3-dehydroretinal, or a mixture of retinal and 3-dehydroretinal. Light-induced isomerization of 11-cis to all-trans retinal triggers a conformational change that activates signaling via G-proteins. Subsequent receptor phosphorylation mediates displacement of the bound G-protein alpha subunit by arrestin and terminates signaling. The polypeptide is Rhodopsin (rho) (Cottocomephorus inermis (Longfin Baikal sculpin)).